A 251-amino-acid polypeptide reads, in one-letter code: Prothoracicostatic peptides (251 aa).

The tract at residues M1 to Q22 is disordered. Positions M1–G77 are excised as a propeptide. Residue W89 is modified to Tryptophan amide. The propeptide occupies G93 to G138. Position 152 is a tryptophan amide (W152). Residues A156–E187 constitute a propeptide that is removed on maturation. A tryptophan amide mark is found at W198 and W228. The interval M227 to A251 is disordered.

Prothoracicostatic peptide 5: Expressed in antennal lobe (AL), corpora cardiaca (CC), corpora allata (CA) and gnathal ganglion (GNG) (at protein level). Expression in AL detected in all animals, in CC, CA and GNG in most (at protein level). Prothoracicostatic peptide 6: Expressed in antennal lobe (AL), corpora cardiaca (CC), corpora allata (CA) and gnathal ganglion (GNG) (at protein level). Expression in AL detected in all animals, expression in GNG in most animals, in CA and CC detected in some animals (at protein level). Prothoracicostatic peptide 7: Expressed in antennal lobe (AL), corpora cardiaca (CC), corpora allata (CA) and gnathal ganglion (GNG) (at protein level). Expression in AL, CA and CC detected in most animals, expression in GNG in some animals (at protein level). Prothoracicostatic peptide precursor-related peptide 2: Expressed in antennal lobe (AL), corpora cardiaca (CC) and corpora allata (CA) with expression detected in few animals (at protein level). Not expressed in gnathal ganglion (GNG) (at protein level). Prothoracicostatic peptide 8: Expressed in antennal lobe (AL), corpora cardiaca (CC), corpora allata (CA) and gnathal ganglion (GNG) (at protein level). Expression in AL detected in all animals, expression in GNG in most animals, in CA and CC detected in some animals (at protein level). Prothoracicostatic peptide precursor-related peptide 3: Expressed in antennal lobe (AL) in few animals (at protein level). Not expressed in corpora cardiaca (CC), corpora allata (CA) and gnathal ganglion (GNG) (at protein level).

It is found in the secreted. This chain is Prothoracicostatic peptides, found in Agrotis ipsilon (Black cutworm moth).